A 522-amino-acid chain; its full sequence is Protein RCC2 (522 aa).

A disordered region spans residues 1–83; the sequence is MPRKKAAAAA…TAGKAGGAAV (83 aa). A Phosphoserine modification is found at S16. A Phosphothreonine modification is found at T20. Positions 24 to 36 are enriched in basic residues; it reads GPRKRGGPAGRKR. Residues S43, S44, S45, S46, S50, and S51 each carry the phosphoserine modification. Positions 71 to 82 are enriched in low complexity; the sequence is RPATAGKAGGAA. Residues K92 and K124 each carry the N6-acetyllysine modification. RCC1 repeat units lie at residues 103-165, 168-219, 221-271, 273-347, 348-401, 403-447, and 448-501; these read KGQL…SLLI, EGKL…ALTE, GSVF…IMDC, GNLY…VLDS, QKRV…AVSE, GGLF…VAAD, and ESTI…VIAR. An N6-acetyllysine modification is found at K293. The required for interaction with RAC1 stretch occupies residues 318–325; it reads KTKDGQIL. Phosphothreonine is present on T342. K377 carries the post-translational modification N6-acetyllysine. Positions 502 to 515 are enriched in basic and acidic residues; the sequence is DESETEKEKIKKLP. The segment at 502-522 is disordered; the sequence is DESETEKEKIKKLPEYNPRTL.

As to quaternary structure, interacts with RAC1. Interacts with nucleotide-free and with GDP and GTP-bound forms of RAC1, with a slight preference for GDP-bound RAC1. Binds preferentially to the nucleotide-free form of RAC1. Interacts with CORO1C. Interacts with microtubules.

It is found in the nucleus. The protein resides in the nucleolus. Its subcellular location is the cytoplasm. The protein localises to the cytoskeleton. It localises to the chromosome. It is found in the centromere. The protein resides in the spindle. Its subcellular location is the midbody. The protein localises to the cell membrane. Multifunctional protein that may affect its functions by regulating the activity of small GTPases, such as RAC1 and RALA. Required for normal progress through the cell cycle, both during interphase and during mitosis. Required for the presence of normal levels of MAD2L1, AURKB and BIRC5 on inner centromeres during mitosis, and for normal attachment of kinetochores to mitotic spindles. Required for normal organization of the microtubule cytoskeleton in interphase cells. Functions as guanine nucleotide exchange factor (GEF) for RALA. Interferes with the activation of RAC1 by guanine nucleotide exchange factors. Prevents accumulation of active, GTP-bound RAC1, and suppresses RAC1-mediated reorganization of the actin cytoskeleton and formation of membrane protrusions. Required for normal cellular responses to contacts with the extracellular matrix of adjacent cells, and for directional cell migration in response to a fibronectin gradient (in vitro). The polypeptide is Protein RCC2 (RCC2) (Homo sapiens (Human)).